The sequence spans 884 residues: Protein translocase subunit SecA (884 aa).

Residues glutamine 88, 106–110, and aspartate 509 each bind ATP; that span reads GEGKT. The segment at 822–884 is disordered; it reads EQKKLKMSGA…PKKGLFANND (63 aa). Basic and acidic residues predominate over residues 833–842; that stretch reads KGGEDLEETK. Zn(2+)-binding residues include cysteine 858, cysteine 860, cysteine 869, and histidine 870.

It belongs to the SecA family. Monomer and homodimer. Part of the essential Sec protein translocation apparatus which comprises SecA, SecYEG and auxiliary proteins SecDF-YajC and YidC. The cofactor is Zn(2+).

The protein localises to the cell inner membrane. It localises to the cytoplasm. The enzyme catalyses ATP + H2O + cellular proteinSide 1 = ADP + phosphate + cellular proteinSide 2.. Its function is as follows. Part of the Sec protein translocase complex. Interacts with the SecYEG preprotein conducting channel. Has a central role in coupling the hydrolysis of ATP to the transfer of proteins into and across the cell membrane, serving as an ATP-driven molecular motor driving the stepwise translocation of polypeptide chains across the membrane. This is Protein translocase subunit SecA from Campylobacter hominis (strain ATCC BAA-381 / DSM 21671 / CCUG 45161 / LMG 19568 / NCTC 13146 / CH001A).